The following is a 128-amino-acid chain: Large ribosomal subunit protein bL17 (128 aa).

It belongs to the bacterial ribosomal protein bL17 family. As to quaternary structure, part of the 50S ribosomal subunit. Contacts protein L32.

This chain is Large ribosomal subunit protein bL17, found in Histophilus somni (strain 129Pt) (Haemophilus somnus).